The following is a 405-amino-acid chain: Na(+)/H(+) antiporter NhaA 1 (405 aa).

The next 11 membrane-spanning stretches (helical) occupy residues 20 to 40, 68 to 88, 105 to 125, 134 to 154, 163 to 183, 186 to 206, 214 to 234, 263 to 283, 301 to 321, 334 to 354, and 371 to 391; these read FVSD…AMIV, LHLW…GLEV, LPVL…VGVV, GWAI…GLLG, LFLL…IAAF, ANLK…MVGM, IWPY…SGVH, GLAP…NAGV, IAAG…VAAV, WIEI…SLFI, and IGIL…LRLT.

The protein belongs to the NhaA Na(+)/H(+) (TC 2.A.33) antiporter family.

The protein localises to the cell inner membrane. The catalysed reaction is Na(+)(in) + 2 H(+)(out) = Na(+)(out) + 2 H(+)(in). In terms of biological role, na(+)/H(+) antiporter that extrudes sodium in exchange for external protons. The sequence is that of Na(+)/H(+) antiporter NhaA 1 from Erythrobacter litoralis (strain HTCC2594).